The sequence spans 460 residues: Phosphomethylpyrimidine synthase (460 aa).

Residues Asn80, Met109, Tyr138, His174, 194-196, 235-238, and Glu274 each bind substrate; these read SRG and DSLR. Residue His278 coordinates Zn(2+). Residue Tyr301 participates in substrate binding. Residue His342 participates in Zn(2+) binding. Cys422, Cys425, and Cys430 together coordinate [4Fe-4S] cluster.

It belongs to the ThiC family. Homodimer. [4Fe-4S] cluster is required as a cofactor.

It carries out the reaction 5-amino-1-(5-phospho-beta-D-ribosyl)imidazole + S-adenosyl-L-methionine = 4-amino-2-methyl-5-(phosphooxymethyl)pyrimidine + CO + 5'-deoxyadenosine + formate + L-methionine + 3 H(+). The protein operates within cofactor biosynthesis; thiamine diphosphate biosynthesis. Functionally, catalyzes the synthesis of the hydroxymethylpyrimidine phosphate (HMP-P) moiety of thiamine from aminoimidazole ribotide (AIR) in a radical S-adenosyl-L-methionine (SAM)-dependent reaction. This chain is Phosphomethylpyrimidine synthase, found in Sulfurimonas denitrificans (strain ATCC 33889 / DSM 1251) (Thiomicrospira denitrificans (strain ATCC 33889 / DSM 1251)).